An 837-amino-acid chain; its full sequence is Translation initiation factor IF-2 (837 aa).

The segment at 94 to 253 is disordered; the sequence is KRSPDEIEAE…QHGFQNPTGP (160 aa). A compositionally biased stretch (basic and acidic residues) spans 95–148; sequence RSPDEIEAERQRELEEQRAAEEAERLKAEEAAARQRAEEEARKAEEAARAKAAE. The segment covering 149 to 171 has biased composition (low complexity); that stretch reads EAVSAQPAAAVEVAAAEPVAKPA. Composition is skewed to basic and acidic residues over residues 172 to 188 and 220 to 229; these read AAEE…PKRD and STDEESDGYR. Basic residues predominate over residues 230–244; it reads RGGRGGKSKLKKRNQ. A tr-type G domain is found at 337–506; that stretch reads TRAPVVTVMG…LLQAEVLELK (170 aa). Residues 346–353 are G1; the sequence is GHVDHGKT. 346–353 contacts GTP; it reads GHVDHGKT. A G2 region spans residues 371–375; that stretch reads GITQH. Residues 392–395 form a G3 region; sequence DTPG. Residues 392–396 and 446–449 contribute to the GTP site; these read DTPGH and NKID. The G4 stretch occupies residues 446 to 449; the sequence is NKID. The tract at residues 482-484 is G5; that stretch reads SAK.

The protein belongs to the TRAFAC class translation factor GTPase superfamily. Classic translation factor GTPase family. IF-2 subfamily.

The protein resides in the cytoplasm. One of the essential components for the initiation of protein synthesis. Protects formylmethionyl-tRNA from spontaneous hydrolysis and promotes its binding to the 30S ribosomal subunits. Also involved in the hydrolysis of GTP during the formation of the 70S ribosomal complex. This is Translation initiation factor IF-2 from Pseudomonas paraeruginosa (strain DSM 24068 / PA7) (Pseudomonas aeruginosa (strain PA7)).